Consider the following 678-residue polypeptide: SPS-sensor component PTR3 (678 aa).

Disordered regions lie at residues 111 to 158 (TGQG…SDPT) and 179 to 211 (ANTE…SSLL). Low complexity predominate over residues 127 to 144 (TSPSSSSLSLTPSRSSST). Basic and acidic residues predominate over residues 149–158 (ADNKTLSDPT). The segment covering 179-194 (ANTEVGSDHPLTTGTT) has biased composition (polar residues).

In terms of assembly, homodimer. Component of the plasma membrane SPS (SSY1-PTR3-SSY5) amino acid sensor complex. Interacts directly with SSY1 and SSY5. Post-translationally, hyperphosphorylated in response to extracellular amino acids and dependent on the amino acid sensor component SSY1. Phosphorylation is positively regulated by casein kinases YCK1 and YCK2, and negatively regulated by phosphatase PP2A regulatory subunit RTS1.

It is found in the cell membrane. Functionally, component of the SPS-sensor system, which regulates the expression of several amino acid-metabolizing enzymes and amino acid- and peptide-permeases in response to extracellular amino acid levels by controlling the activity of two transcription factors, STP1 and STP2. The polypeptide is SPS-sensor component PTR3 (PTR3) (Saccharomyces cerevisiae (strain ATCC 204508 / S288c) (Baker's yeast)).